A 304-amino-acid chain; its full sequence is Methionyl-tRNA formyltransferase (304 aa).

106–109 contributes to the (6S)-5,6,7,8-tetrahydrofolate binding site; that stretch reads SLLP.

Belongs to the Fmt family.

The catalysed reaction is L-methionyl-tRNA(fMet) + (6R)-10-formyltetrahydrofolate = N-formyl-L-methionyl-tRNA(fMet) + (6S)-5,6,7,8-tetrahydrofolate + H(+). Functionally, attaches a formyl group to the free amino group of methionyl-tRNA(fMet). The formyl group appears to play a dual role in the initiator identity of N-formylmethionyl-tRNA by promoting its recognition by IF2 and preventing the misappropriation of this tRNA by the elongation apparatus. The sequence is that of Methionyl-tRNA formyltransferase from Thermosipho africanus (strain TCF52B).